Here is a 268-residue protein sequence, read N- to C-terminus: GTP cyclohydrolase FolE2 (268 aa).

This sequence belongs to the GTP cyclohydrolase IV family.

The enzyme catalyses GTP + H2O = 7,8-dihydroneopterin 3'-triphosphate + formate + H(+). Its pathway is cofactor biosynthesis; 7,8-dihydroneopterin triphosphate biosynthesis; 7,8-dihydroneopterin triphosphate from GTP: step 1/1. Functionally, converts GTP to 7,8-dihydroneopterin triphosphate. This Paraburkholderia phymatum (strain DSM 17167 / CIP 108236 / LMG 21445 / STM815) (Burkholderia phymatum) protein is GTP cyclohydrolase FolE2.